The chain runs to 404 residues: F-box only protein 12 (404 aa).

Residues 1–44 form the F-box domain; that stretch reads MKNSIPIDLIYEILSRLPAKSVARCRCVSKRWRSILRHQVFTEL. The chain crosses the membrane as a helical span at residues 383–403; the sequence is LAILFCLFFLLFNYLIRLCWV.

The protein localises to the membrane. The protein is F-box only protein 12 (FBX12) of Arabidopsis thaliana (Mouse-ear cress).